Consider the following 307-residue polypeptide: MVNTHVNLPGLDLKNPVMPASGTFGFGDVPAAQKFDLNDLGAMVIKTTTPHATTGNPQPQIAILEDGVLNSVGLTNPGVDQVISEKLTKLRHQYPDLPIMASVGGDSEDDYVEVAKKLSASGLVNALEINVSCPNVAQGGMSFGVHAGVVEELTKKIKMAVALPIYVKLTPNVTDIVEIAKAAESGGADGISMINTLLGMRIDIKTRKPLLGHNMGGLSGEAVKPIAIRMISQVRQVTQLPIIGMGGISTAQDVIEFILAGANAVAVGSAHFEDELAAKHIVEELPAELEKLGVEDINDLVGQVKFN.

Residues Ser-21 and 46–47 (KT) each bind FMN. Residues Lys-46, 70 to 74 (NSVGL), and Asn-130 contribute to the substrate site. Position 130 (Asn-130) interacts with FMN. The active-site Nucleophile is the Cys-133. FMN-binding residues include Lys-168 and Ile-194. 195-196 (NT) provides a ligand contact to substrate. Residues Gly-220, 246 to 247 (GG), and 268 to 269 (GS) each bind FMN.

Belongs to the dihydroorotate dehydrogenase family. Type 1 subfamily. Homodimer. Requires FMN as cofactor.

It localises to the cytoplasm. It carries out the reaction (S)-dihydroorotate + fumarate = orotate + succinate. The protein operates within pyrimidine metabolism; UMP biosynthesis via de novo pathway. In terms of biological role, catalyzes the conversion of dihydroorotate to orotate with fumarate as the electron acceptor. The polypeptide is Dihydroorotate dehydrogenase A (fumarate) (pyrD) (Lactobacillus helveticus (strain DPC 4571)).